A 277-amino-acid polypeptide reads, in one-letter code: MTWIEAIILGLVQGLTEFLPISSSAHIRIVGEFLPSATDPGAAFTAITQLGTELAVLIYFWRDITRIIGRWSAAVTGRIPHSDPDARMGWLIIVGSIPIAVLGLLLEDWIDTEFRSLWITATMLIVFGVLLALADRLGRQTKPLEKLTVRDGVLYGLAQALALIPGVSRSGGTIAAGLAMGYTRPAATRYAFLLAVPAVFASGLYKLYTSLTDPGTQGPYGMGETLVATAVAFVVAYAVIAWLMRFISTNSYLPFVWYRILLGGVLFALLGAGVISA.

The next 7 membrane-spanning stretches (helical) occupy residues 1–21 (MTWIEAIILGLVQGLTEFLPI), 41–61 (GAAFTAITQLGTELAVLIYFW), 90–110 (WLIIVGSIPIAVLGLLLEDWI), 114–134 (FRSLWITATMLIVFGVLLALA), 191–211 (AFLLAVPAVFASGLYKLYTSL), 224–244 (ETLVATAVAFVVAYAVIAWLM), and 255–275 (FVWYRILLGGVLFALLGAGVI).

It belongs to the UppP family.

The protein resides in the cell membrane. The enzyme catalyses di-trans,octa-cis-undecaprenyl diphosphate + H2O = di-trans,octa-cis-undecaprenyl phosphate + phosphate + H(+). In terms of biological role, catalyzes the dephosphorylation of undecaprenyl diphosphate (UPP). Confers resistance to bacitracin. The chain is Undecaprenyl-diphosphatase from Micrococcus luteus (strain ATCC 4698 / DSM 20030 / JCM 1464 / CCM 169 / CCUG 5858 / IAM 1056 / NBRC 3333 / NCIMB 9278 / NCTC 2665 / VKM Ac-2230) (Micrococcus lysodeikticus).